We begin with the raw amino-acid sequence, 1059 residues long: Ubiquitin carboxyl-terminal hydrolase 36 (1059 aa).

Disordered regions lie at residues 22-45 and 102-145; these read LGGNSSAGSSTDQAKSGEDTNGSL and GKLV…KPKR. Residues 23-45 show a composition bias toward polar residues; it reads GGNSSAGSSTDQAKSGEDTNGSL. A compositionally biased stretch (low complexity) spans 121–138; the sequence is HPNNQSHHNHPHPTSNPN. One can recognise a USP domain in the interval 168–457; it reads TGMINVGNTC…NAYIMFFELD (290 aa). C177 (nucleophile) is an active-site residue. Catalysis depends on H416, which acts as the Proton acceptor. 4 disordered regions span residues 464 to 512, 554 to 853, 941 to 1005, and 1022 to 1059; these read PPAN…YTNG, ATSA…VTSN, RQRD…FYNQ, and FGGAGSAKFQQQRALQRHLSAGGGFSRRQPSAQQQQQT. 2 stretches are compositionally biased toward low complexity: residues 479-494 and 561-580; these read STTPVPAATVSSPSPT and NGNKSSSPSSNSSSNHKSIN. A phosphoserine mark is found at S490 and S492. Polar residues predominate over residues 603 to 615; the sequence is TTAQLPSMPNMTE. Residues T632 and T636 each carry the phosphothreonine modification. Phosphoserine is present on residues S646 and S648. Residues 673–702 show a composition bias toward polar residues; that stretch reads ESGQTNGHSKTNGSLTNGSASSSVHVNNSK. Over residues 703–720 the composition is skewed to basic and acidic residues; sequence QKTDAIDEIFKSLKKSAD. S721 carries the post-translational modification Phosphoserine. Positions 721-730 are enriched in acidic residues; sequence SEEDDDEEEP. Over residues 740–750 the composition is skewed to low complexity; it reads PQKQSQSQSKA. The segment covering 751 to 760 has biased composition (pro residues); it reads PPSPKTPPSP. Phosphoserine is present on S753. T756 is subject to Phosphothreonine. The residue at position 759 (S759) is a Phosphoserine. Over residues 779–788 the composition is skewed to acidic residues; sequence DAIDDDDDAV. At T799 the chain carries Phosphothreonine. Positions 806 to 818 are enriched in polar residues; that stretch reads NPFSSSKPSTDSP. S817 is subject to Phosphoserine. At T820 the chain carries Phosphothreonine. A compositionally biased stretch (polar residues) spans 833 to 853; sequence ALKSHQQPRVGNGYQSNVTSN. Low complexity predominate over residues 963–974; sequence SGSAKGNNASNS.

This sequence belongs to the peptidase C19 family. Interacts with atms/PAF1, but not with CycT.

The protein resides in the nucleus. It is found in the nucleolus. The enzyme catalyses Thiol-dependent hydrolysis of ester, thioester, amide, peptide and isopeptide bonds formed by the C-terminal Gly of ubiquitin (a 76-residue protein attached to proteins as an intracellular targeting signal).. Its function is as follows. Required for maintaining multiple types of adult stem cells, including male and female germline, epithelial follicle cell and intestinal stem cells. May function as a transcriptional repressor by continually deubiquiting histone H2B at the promoters of genes critical for cellular differentiation, thereby preventing histone H3 'Lys-4' trimethylation (H3K4). Controls selective autophagy activation by ubiquitinated proteins. In Drosophila sechellia (Fruit fly), this protein is Ubiquitin carboxyl-terminal hydrolase 36 (Usp36).